The primary structure comprises 297 residues: MIPIKTPVGEFKVWIKRFGTNPKIKVLLLHGGPAMTHEYMECFETFFQREGFEFYEYDQLGSYYSDQPKDSSLWTIDRFVDEVEQVRKAINADKDNFYVLGNSWGGILAMEYALKYQQNMKGLLVSNMMASAPEYGKYADEVLAKQMKPEILKEIRDLEAKKDFENPRYMELLLPNFYKEHLCRLNEWPDGLNRASKHVNGEIYTLMQGPSEFGISGRLAKWDIKNRLHEITIPTLMIGAKYDTMDPKAMEEQSKLVKKGRYLYCPNGSHLAMWDDQKVFMNGVIQFINDVNDEKVN.

An AB hydrolase-1 domain is found at 26–131 (VLLLHGGPAM…GLLVSNMMAS (106 aa)). Serine 103 functions as the Nucleophile in the catalytic mechanism. Residue aspartate 243 is part of the active site. Histidine 270 functions as the Proton donor in the catalytic mechanism.

Belongs to the peptidase S33 family. Monomer.

The enzyme catalyses Release of N-terminal proline from a peptide.. In terms of biological role, releases the N-terminal proline from various substrates. This Flavobacterium johnsoniae (strain ATCC 17061 / DSM 2064 / JCM 8514 / BCRC 14874 / CCUG 350202 / NBRC 14942 / NCIMB 11054 / UW101) (Cytophaga johnsonae) protein is Proline iminopeptidase (fpaP).